A 341-amino-acid chain; its full sequence is Fe-S cluster assembly protein DRE2 (341 aa).

The N-terminal SAM-like domain stretch occupies residues 1 to 157 (MNTLLLLHPT…FKKLSSPPTL (157 aa)). The disordered stretch occupies residues 151–171 (LSSPPTLTDSSEADEDEESQL). The segment at 157–204 (LTDSSEADEDEESQLNEKLKGSKLIYFDESSDDEIIDEDELLRDDDGA) is linker. A compositionally biased stretch (acidic residues) spans 161-170 (SEADEDEESQ). [2Fe-2S] cluster is bound by residues cysteine 215, cysteine 227, cysteine 230, and cysteine 232. Residues 215–232 (CALPNGKRRKKACKDCTC) are fe-S binding site A. 4 residues coordinate [4Fe-4S] cluster: cysteine 304, cysteine 307, cysteine 315, and cysteine 318. 2 short sequence motifs (cx2C motif) span residues 304–307 (CGSC) and 315–318 (CDGC). Residues 304–318 (CGSCALGDAFRCDGC) form a fe-S binding site B region.

The protein belongs to the anamorsin family. As to quaternary structure, monomer. Interacts with TAH18. Interacts with MIA40. [2Fe-2S] cluster is required as a cofactor. It depends on [4Fe-4S] cluster as a cofactor.

The protein localises to the cytoplasm. Its subcellular location is the mitochondrion intermembrane space. Functionally, component of the cytosolic iron-sulfur (Fe-S) protein assembly (CIA) machinery required for the maturation of extramitochondrial Fe-S proteins. Part of an electron transfer chain functioning in an early step of cytosolic Fe-S biogenesis, facilitating the de novo assembly of a [4Fe-4S] cluster on the scaffold complex CFD1-NBP35. Electrons are transferred to DRE2 from NADPH via the FAD- and FMN-containing protein TAH18. TAH18-DRE2 are also required for the assembly of the diferric tyrosyl radical cofactor of ribonucleotide reductase (RNR), probably by providing electrons for reduction during radical cofactor maturation in the catalytic small subunit RNR2. The chain is Fe-S cluster assembly protein DRE2 from Komagataella phaffii (strain GS115 / ATCC 20864) (Yeast).